A 178-amino-acid chain; its full sequence is Probable chorismate pyruvate-lyase (178 aa).

Substrate-binding residues include methionine 37, arginine 78, leucine 114, and glutamate 165.

It belongs to the UbiC family.

It localises to the cytoplasm. It carries out the reaction chorismate = 4-hydroxybenzoate + pyruvate. It participates in cofactor biosynthesis; ubiquinone biosynthesis. Functionally, removes the pyruvyl group from chorismate, with concomitant aromatization of the ring, to provide 4-hydroxybenzoate (4HB) for the ubiquinone pathway. The polypeptide is Probable chorismate pyruvate-lyase (Aeromonas salmonicida (strain A449)).